We begin with the raw amino-acid sequence, 100 residues long: Large ribosomal subunit protein bL21 (100 aa).

Belongs to the bacterial ribosomal protein bL21 family. In terms of assembly, part of the 50S ribosomal subunit. Contacts protein L20.

This protein binds to 23S rRNA in the presence of protein L20. The polypeptide is Large ribosomal subunit protein bL21 (Mycoplasmopsis synoviae (strain 53) (Mycoplasma synoviae)).